The chain runs to 918 residues: Valine--tRNA ligase (918 aa).

The 'HIGH' region signature appears at 50–60 (PNVTGSLHMGH). The 'KMSKS' region motif lies at 548–552 (KMSKS). An ATP-binding site is contributed by Lys-551. Positions 849 to 883 (NDFVNLEALKDRLTKDLKKVNSDIETLNKRISNKN) form a coiled coil.

Belongs to the class-I aminoacyl-tRNA synthetase family. ValS type 1 subfamily. In terms of assembly, monomer.

It is found in the cytoplasm. The catalysed reaction is tRNA(Val) + L-valine + ATP = L-valyl-tRNA(Val) + AMP + diphosphate. Its function is as follows. Catalyzes the attachment of valine to tRNA(Val). As ValRS can inadvertently accommodate and process structurally similar amino acids such as threonine, to avoid such errors, it has a 'posttransfer' editing activity that hydrolyzes mischarged Thr-tRNA(Val) in a tRNA-dependent manner. This Prochlorococcus marinus subsp. pastoris (strain CCMP1986 / NIES-2087 / MED4) protein is Valine--tRNA ligase.